Consider the following 453-residue polypeptide: Bifunctional protein GlmU (453 aa).

The segment at Met1–Arg226 is pyrophosphorylase. UDP-N-acetyl-alpha-D-glucosamine is bound by residues Leu7–Gly10, Lys21, Gln73, and Gly78–Thr79. Asp103 serves as a coordination point for Mg(2+). UDP-N-acetyl-alpha-D-glucosamine-binding residues include Gly140, Glu155, Asn170, and Asn224. Asn224 provides a ligand contact to Mg(2+). The interval Ala227–Lys247 is linker. Positions Gly248–Gln453 are N-acetyltransferase. UDP-N-acetyl-alpha-D-glucosamine is bound by residues Arg329 and Lys347. The Proton acceptor role is filled by His359. Positions 362 and 373 each coordinate UDP-N-acetyl-alpha-D-glucosamine. 3 residues coordinate acetyl-CoA: Ala376, Ala419, and Arg436.

This sequence in the N-terminal section; belongs to the N-acetylglucosamine-1-phosphate uridyltransferase family. It in the C-terminal section; belongs to the transferase hexapeptide repeat family. In terms of assembly, homotrimer. Requires Mg(2+) as cofactor.

Its subcellular location is the cytoplasm. The catalysed reaction is alpha-D-glucosamine 1-phosphate + acetyl-CoA = N-acetyl-alpha-D-glucosamine 1-phosphate + CoA + H(+). The enzyme catalyses N-acetyl-alpha-D-glucosamine 1-phosphate + UTP + H(+) = UDP-N-acetyl-alpha-D-glucosamine + diphosphate. Its pathway is nucleotide-sugar biosynthesis; UDP-N-acetyl-alpha-D-glucosamine biosynthesis; N-acetyl-alpha-D-glucosamine 1-phosphate from alpha-D-glucosamine 6-phosphate (route II): step 2/2. The protein operates within nucleotide-sugar biosynthesis; UDP-N-acetyl-alpha-D-glucosamine biosynthesis; UDP-N-acetyl-alpha-D-glucosamine from N-acetyl-alpha-D-glucosamine 1-phosphate: step 1/1. It functions in the pathway bacterial outer membrane biogenesis; LPS lipid A biosynthesis. Its function is as follows. Catalyzes the last two sequential reactions in the de novo biosynthetic pathway for UDP-N-acetylglucosamine (UDP-GlcNAc). The C-terminal domain catalyzes the transfer of acetyl group from acetyl coenzyme A to glucosamine-1-phosphate (GlcN-1-P) to produce N-acetylglucosamine-1-phosphate (GlcNAc-1-P), which is converted into UDP-GlcNAc by the transfer of uridine 5-monophosphate (from uridine 5-triphosphate), a reaction catalyzed by the N-terminal domain. This chain is Bifunctional protein GlmU, found in Prochlorococcus marinus (strain MIT 9211).